The chain runs to 492 residues: MTPVTFALDLQRRQWEQAAELVDRTSAASDRAETVSEVSVGKTPNEVVYKENKLRLLHYESKTETQYDVPILIVYALINRPYILDLQPDRSVVQTLLEQGFDVYLIDWGEPSRLDTHLTLDDYVTRYIDNCVDIVRDRSGQDSINLLGYCMGGTMSVMYAALFPEKVRNLGLMAAGLVFDDTGGVLERWGDEQYYSPKAVTDAFGNVPSEFLDVGFALMDPVENFVTKYVRLFENVENESFVENFSRMEQWLSDGIDVAGETYKQFLEDVYQQNKLAQNELMLDGKQVDLERLEMPILQIVGEYDHLIPPEASKPFNDLVPSEDTEVIEGATGHIGLSVSSRSHGDLWPAVSDWFAERSETGTDETPDSETEETRPDSQAEETDETPDEGLKPQAAASNETVAEEPEPQVVESNETTEEELEPQAVEANETAPEELESIDGIGPTYAERLASVGITSVSGLAAADPSEIAATIDVPVSRVTAWVEQASDRTD.

The AB hydrolase-1 domain maps to 70-336 (PILIVYALIN…VIEGATGHIG (267 aa)). Residues Cys150, Asp305, and His334 each act as charge relay system in the active site. Positions 359-443 (SETGTDETPD…EELESIDGIG (85 aa)) are disordered. 2 stretches are compositionally biased toward acidic residues: residues 362 to 371 (GTDETPDSET) and 379 to 388 (QAEETDETPD).

Belongs to the PHA/PHB synthase family. In terms of assembly, heterodimer with PhaE.

The protein operates within biopolymer metabolism; poly-(R)-3-hydroxybutanoate biosynthesis. In terms of biological role, involved in the production of polyhydroxyalkonic acids (PHAs), which are water-insoluble biopolymers used as intracellular energy reserve material when cells grow under conditions of nutrient limitation. PHAs are composed primarily of 3-hydroxybutyric acid (3HB) and 3-hydroxyvaleric acid (3HV). Required for the production of poly-beta-hydroxybutyrate (PHB) and poly(beta-hydroxybutyrate-co-beta-hydroxyvalerate) (PHBV). This chain is Poly(3-hydroxyalkanoate) polymerase subunit PhaC (phaC), found in Haloferax mediterranei (strain ATCC 33500 / DSM 1411 / JCM 8866 / NBRC 14739 / NCIMB 2177 / R-4) (Halobacterium mediterranei).